A 275-amino-acid chain; its full sequence is 2,3,4,5-tetrahydropyridine-2,6-dicarboxylate N-succinyltransferase (275 aa).

Substrate is bound by residues Arg-105 and Asp-142.

It belongs to the transferase hexapeptide repeat family. Homotrimer.

The protein resides in the cytoplasm. It catalyses the reaction (S)-2,3,4,5-tetrahydrodipicolinate + succinyl-CoA + H2O = (S)-2-succinylamino-6-oxoheptanedioate + CoA. It functions in the pathway amino-acid biosynthesis; L-lysine biosynthesis via DAP pathway; LL-2,6-diaminopimelate from (S)-tetrahydrodipicolinate (succinylase route): step 1/3. The polypeptide is 2,3,4,5-tetrahydropyridine-2,6-dicarboxylate N-succinyltransferase (Histophilus somni (strain 129Pt) (Haemophilus somnus)).